The following is a 275-amino-acid chain: L-aspartate dehydrogenase (275 aa).

The NAD(+) site is built by alanine 130 and asparagine 196. Histidine 226 is a catalytic residue.

It belongs to the L-aspartate dehydrogenase family.

It catalyses the reaction L-aspartate + NADP(+) + H2O = oxaloacetate + NH4(+) + NADPH + H(+). It carries out the reaction L-aspartate + NAD(+) + H2O = oxaloacetate + NH4(+) + NADH + H(+). Its pathway is cofactor biosynthesis; NAD(+) biosynthesis; iminoaspartate from L-aspartate (dehydrogenase route): step 1/1. Its function is as follows. Specifically catalyzes the NAD or NADP-dependent dehydrogenation of L-aspartate to iminoaspartate. This chain is L-aspartate dehydrogenase, found in Ruegeria pomeroyi (strain ATCC 700808 / DSM 15171 / DSS-3) (Silicibacter pomeroyi).